Reading from the N-terminus, the 242-residue chain is Type III pantothenate kinase (242 aa).

Residue 7–14 (DLGNSRFK) participates in ATP binding. Substrate is bound by residues Tyr91 and 98 to 101 (GVDR). Residue Asp100 is the Proton acceptor of the active site. Thr121 contacts ATP. Thr171 provides a ligand contact to substrate.

Belongs to the type III pantothenate kinase family. As to quaternary structure, homodimer. Requires NH4(+) as cofactor. K(+) is required as a cofactor.

It is found in the cytoplasm. It carries out the reaction (R)-pantothenate + ATP = (R)-4'-phosphopantothenate + ADP + H(+). Its pathway is cofactor biosynthesis; coenzyme A biosynthesis; CoA from (R)-pantothenate: step 1/5. Its function is as follows. Catalyzes the phosphorylation of pantothenate (Pan), the first step in CoA biosynthesis. This chain is Type III pantothenate kinase, found in Xanthomonas campestris pv. campestris (strain 8004).